The chain runs to 269 residues: Ribonuclease HII (269 aa).

The region spanning 83–269 (YLIAGVDEVG…HRMSFLTNIL (187 aa)) is the RNase H type-2 domain. A divalent metal cation-binding residues include Asp89, Glu90, and Asp185.

This sequence belongs to the RNase HII family. Mn(2+) is required as a cofactor. The cofactor is Mg(2+).

It localises to the cytoplasm. The catalysed reaction is Endonucleolytic cleavage to 5'-phosphomonoester.. Endonuclease that specifically degrades the RNA of RNA-DNA hybrids. This is Ribonuclease HII from Clostridium botulinum (strain Langeland / NCTC 10281 / Type F).